We begin with the raw amino-acid sequence, 359 residues long: Type-1 angiotensin II receptor (359 aa).

The Extracellular portion of the chain corresponds to 1 to 25 (MVPNYSTEETVKRIHVDCPVSGRHS). N-linked (GlcNAc...) asparagine glycosylation occurs at Asn4. Residue Asp17 participates in angiotensin II binding. Cystine bridges form between Cys18–Cys274 and Cys101–Cys180. Residues 26–55 (YIYIMVPTVYSIIFIIGIFGNSLVVIVIYC) traverse the membrane as a helical segment. The Cytoplasmic portion of the chain corresponds to 56–61 (YMKLKT). The helical transmembrane segment at 62 to 89 (VASIFLLNLALADLCFLITLPLWAAYTA) threads the bilayer. The Extracellular portion of the chain corresponds to 90–98 (MEYQWPFGN). The helical transmembrane segment at 99–125 (CLCKLASAGISFNLYASVFLLTCLSID) threads the bilayer. The Cytoplasmic segment spans residues 126 to 141 (RYLAIVHPVKSRIRRT). A helical transmembrane segment spans residues 142–165 (MFVARVTCIVIWLLAGVASLPVII). Residues 166–190 (HRNIFFAENLNMTVCGFRYDNNNTT) lie on the Extracellular side of the membrane. Residue Arg167 participates in angiotensin II binding. N-linked (GlcNAc...) asparagine glycosylation occurs at Asn176. 2 residues coordinate angiotensin II: Phe182 and Tyr184. 2 N-linked (GlcNAc...) asparagine glycosylation sites follow: Asn187 and Asn188. Residues 191–216 (LRVGLGLSKNLLGFLIPFLIILTSYT) form a helical membrane-spanning segment. Lys199 contributes to the angiotensin II binding site. The Cytoplasmic segment spans residues 217–239 (LIWKTLKKAYQIQRNKTRNDDIF). The chain crosses the membrane as a helical span at residues 240–268 (KMIVAIVFFFFFSWIPHQVFTFLDVLIQL). The Extracellular portion of the chain corresponds to 269–278 (HVITDCKITD). Residues 279-304 (IVDTAMPFTICIAYFNNCLNPFFYVF) traverse the membrane as a helical segment. Over 305 to 359 (FGKNFKKYFLQLIKYIPPNVSTHPSLTTKMSSLSYRPPENIRLPTKKTAGSFDAE) the chain is Cytoplasmic.

It belongs to the G-protein coupled receptor 1 family. Post-translationally, C-terminal Ser or Thr residues may be phosphorylated.

It is found in the cell membrane. In terms of biological role, receptor for angiotensin II, a vasoconstricting peptide, which acts as a key regulator of blood pressure and sodium retention by the kidney. The activated receptor in turn couples to G-alpha proteins G(q) (GNAQ, GNA11, GNA14 or GNA15) and thus activates phospholipase C and increases the cytosolic Ca(2+) concentrations, which in turn triggers cellular responses such as stimulation of protein kinase C. The polypeptide is Type-1 angiotensin II receptor (AGTR1) (Gallus gallus (Chicken)).